A 139-amino-acid polypeptide reads, in one-letter code: Holo-[acyl-carrier-protein] synthase (139 aa).

Positions 8 and 57 each coordinate Mg(2+).

The protein belongs to the P-Pant transferase superfamily. AcpS family. Mg(2+) is required as a cofactor.

It is found in the cytoplasm. It catalyses the reaction apo-[ACP] + CoA = holo-[ACP] + adenosine 3',5'-bisphosphate + H(+). Transfers the 4'-phosphopantetheine moiety from coenzyme A to a Ser of acyl-carrier-protein. The sequence is that of Holo-[acyl-carrier-protein] synthase from Rhizobium meliloti (strain 1021) (Ensifer meliloti).